The following is a 94-amino-acid chain: U1-theraphotoxin-Sp1a (94 aa).

A signal peptide spans 1–22 (MIFLLPSIISVMLLAEPVLMLG). Positions 23 to 58 (DTEDADLMEMVQLSRPFFNPIIRAVELVELREERQR) are excised as a propeptide. 3 disulfides stabilise this stretch: C60-C78, C67-C83, and C77-C88. Position 92 is a valine amide (V92).

This sequence belongs to the neurotoxin 14 (magi-1) family. OAIP-1 subfamily. Expressed by the venom gland.

The protein localises to the secreted. Probable ion channel inhibitor. Shows insecticidal activity. Acts synergistically with the neonicotinoid insecticide imidacloprid. Is neither a repellent that repels insects nor an attractant that is preferentially consumed by insects. Is very stable. The polypeptide is U1-theraphotoxin-Sp1a (Selenotypus plumipes (Australian featherleg tarantula)).